A 201-amino-acid chain; its full sequence is MARYTGPKSRIARKFGEGIFGADKVLSKKNYPPGQHGNSRKRKTSEYGVQLREKQKAKYTYGVLEKQFRNLFEKAATAKGITGEVLLQLLEGRLDNVVFRLGIAPTRAAARQLVSHKHITVDGEVVNIPSFAVKPGQLIGVRERSKSLEVIANSLAGFNHSKYAWLEWDETSKVGKMLHIPERADIPENIKEHLIVELYSK.

Residues 26–48 form a disordered region; the sequence is LSKKNYPPGQHGNSRKRKTSEYG. In terms of domain architecture, S4 RNA-binding spans 92 to 155; that stretch reads GRLDNVVFRL…KSLEVIANSL (64 aa).

The protein belongs to the universal ribosomal protein uS4 family. As to quaternary structure, part of the 30S ribosomal subunit. Contacts protein S5. The interaction surface between S4 and S5 is involved in control of translational fidelity.

Functionally, one of the primary rRNA binding proteins, it binds directly to 16S rRNA where it nucleates assembly of the body of the 30S subunit. In terms of biological role, with S5 and S12 plays an important role in translational accuracy. This chain is Small ribosomal subunit protein uS4, found in Bacteroides thetaiotaomicron (strain ATCC 29148 / DSM 2079 / JCM 5827 / CCUG 10774 / NCTC 10582 / VPI-5482 / E50).